Here is a 181-residue protein sequence, read N- to C-terminus: Translation initiation factor IF-3 (181 aa).

Belongs to the IF-3 family. As to quaternary structure, monomer.

It is found in the cytoplasm. In terms of biological role, IF-3 binds to the 30S ribosomal subunit and shifts the equilibrium between 70S ribosomes and their 50S and 30S subunits in favor of the free subunits, thus enhancing the availability of 30S subunits on which protein synthesis initiation begins. The protein is Translation initiation factor IF-3 of Azotobacter vinelandii.